The chain runs to 186 residues: Dynactin subunit 3 (186 aa).

An N-acetylalanine modification is found at A2. Residues 135–157 adopt a coiled-coil conformation; it reads QQQDQCVEITEESKALLEEYNKT.

This sequence belongs to the dynactin subunit 3 family. As to quaternary structure, subunit of dynactin, a multiprotein complex part of a tripartite complex with dynein and a adapter, such as BICDL1, BICD2 or HOOK3. The dynactin complex is built around ACTR1A/ACTB filament and consists of an actin-related filament composed of a shoulder domain, a pointed end and a barbed end. Its length is defined by its flexible shoulder domain. The soulder is composed of 2 DCTN1 subunits, 4 DCTN2 and 2 DCTN3. The 4 DCNT2 (via N-terminus) bind the ACTR1A filament and act as molecular rulers to determine the length. The pointed end is important for binding dynein-dynactin cargo adapters. Consists of 4 subunits: ACTR10, DCNT4, DCTN5 and DCTN6. The barbed end is composed of a CAPZA1:CAPZB heterodimers, which binds ACTR1A/ACTB filament and dynactin and stabilizes dynactin.

It localises to the cytoplasm. The protein resides in the cytoskeleton. It is found in the microtubule organizing center. The protein localises to the centrosome. Its subcellular location is the chromosome. It localises to the centromere. The protein resides in the kinetochore. It is found in the spindle. The protein localises to the cleavage furrow. Its subcellular location is the midbody. Functionally, part of the dynactin complex that activates the molecular motor dynein for ultra-processive transport along microtubules. Together with dynein may be involved in spindle assembly and cytokinesis. The sequence is that of Dynactin subunit 3 (DCTN3) from Bos taurus (Bovine).